The sequence spans 215 residues: Sodium channel regulatory subunit beta-3 (215 aa).

Positions 1–24 (MPAFNRLLPLASLVLIYWVRVCFP) are cleaved as a signal peptide. Residues 25–138 (VCVEVPSETE…EAHRPFVKTT (114 aa)) enclose the Ig-like C2-type domain. The Extracellular segment spans residues 25–156 (VCVEVPSETE…EEAGEDFTSV (132 aa)). Intrachain disulfides connect Cys26-Cys48 and Cys45-Cys120. 4 N-linked (GlcNAc...) asparagine glycosylation sites follow: Asn95, Asn109, Asn113, and Asn121. Residues 157-178 (VSEIMMYILLVFLTLWLFIEMI) traverse the membrane as a helical segment. Residues 179 to 215 (YCYRKVSKAEEAAQENASDYLAIPSENKENSVVPVEE) lie on the Cytoplasmic side of the membrane.

It belongs to the sodium channel auxiliary subunit SCN3B (TC 8.A.17) family. As to quaternary structure, a voltage-gated sodium (Nav) channel consists of an ion-conducting pore-forming alpha subunit functional on its own that is regulated by one or more beta subunits. Forms homodimers and homotrimers. SCN3B is non-covalently associated with alpha subunits and induces the formation of alpha subunit oligomers, including trimers. Interacts with SCN5A/Nav1.5; regulatory subunit of SCN5A/Nav1.5. Interacts with SCN7A/Nav2.1; probable regulatory subunit of SCN7A/Nav2.1. Interacts with SCN10A; regulatory subunit of SCN10A/Nav1.8. Interacts with NFASC; probably involved in targeting the sodium channels to the nodes of Ranvier. Post-translationally, intramolecular disulfide bonds favor the voltage-gated sodium channel oligomeric complex assembly. N-glycosylated.

Its subcellular location is the cell membrane. Regulatory subunit of multiple voltage-gated sodium (Nav) channels directly mediating the depolarization of excitable membranes. Navs, also called VGSCs (voltage-gated sodium channels) or VDSCs (voltage-dependent sodium channels), operate by switching between closed and open conformations depending on the voltage difference across the membrane. In the open conformation they allow Na(+) ions to selectively pass through the pore, along their electrochemical gradient. The influx of Na+ ions provokes membrane depolarization, initiating the propagation of electrical signals throughout cells and tissues. The accessory beta subunits participate in localization and functional modulation of the Nav channels. Modulates the activity of SCN2A/Nav1.2, causing a hyperpolarizing shift in the voltage-dependence of inactivation of the channel and increasing the fraction of channels operating in the fast gating mode. Modulates the activity of SCN5A/Nav1.5. Could also regulate the atypical sodium channel SCN7A/Nav2.1. Modulates the activity of SCN10A/Nav1.8, regulating its oligomerization and accelerating the recovery from inactivation. The chain is Sodium channel regulatory subunit beta-3 from Mus musculus (Mouse).